A 32-amino-acid polypeptide reads, in one-letter code: Photosystem II reaction center protein T (32 aa).

The chain crosses the membrane as a helical span at residues 3–23; sequence AFAYVLILTLAVVTLFFAVAF.

Belongs to the PsbT family. PSII is composed of 1 copy each of membrane proteins PsbA, PsbB, PsbC, PsbD, PsbE, PsbF, PsbH, PsbI, PsbJ, PsbK, PsbL, PsbM, PsbT, PsbX, PsbY, Psb30/Ycf12, peripheral proteins PsbO, CyanoQ (PsbQ), PsbU, PsbV and a large number of cofactors. It forms dimeric complexes.

It is found in the cellular thylakoid membrane. Functionally, found at the monomer-monomer interface of the photosystem II (PS II) dimer, plays a role in assembly and dimerization of PSII. PSII is a light-driven water plastoquinone oxidoreductase, using light energy to abstract electrons from H(2)O, generating a proton gradient subsequently used for ATP formation. This is Photosystem II reaction center protein T from Prochlorococcus marinus (strain MIT 9301).